We begin with the raw amino-acid sequence, 1537 residues long: Adhesion G protein-coupled receptor L3 (1537 aa).

Residues 1–19 (MWPPQLLILTMLLAPVVHG) form the signal peptide. Over 20–943 (GKHNERHPAL…VKHSDAVHDL (924 aa)) the chain is Extracellular. The disordered stretch occupies residues 53–80 (PAAERSTAHRGQGPRGAARGVRGPGAPG). An SUEL-type lectin domain is found at 103-192 (SCESYPIELR…KYLEVQYECV (90 aa)). Disulfide bonds link Cys-104–Cys-134, Cys-113–Cys-191, Cys-146–Cys-178, Cys-159–Cys-165, and Cys-203–Cys-385. Asn-161 carries an N-linked (GlcNAc...) asparagine glycan. One can recognise an Olfactomedin-like domain in the interval 202-461 (LCPGLLKGVY…VVKYSLDFGP (260 aa)). Residues 317 to 347 (YHDTSPYRWGGKSDIDLAVDENGLWVIYATE) are interaction with FLRT3. Ca(2+)-binding residues include Asp-332, Asn-380, Ala-381, and Val-435. A disordered region spans residues 521 to 540 (RSTTASLPGRRNRSTSTPSP). N-linked (GlcNAc...) asparagine glycans are attached at residues Asn-532, Asn-617, Asn-827, Asn-840, Asn-885, and Asn-911. The GAIN-B domain occupies 756 to 935 (DIVRENTDNI…AVLMAHVEVK (180 aa)). 2 disulfide bridges follow: Cys-886/Cys-917 and Cys-905/Cys-919. The interval 886–935 (CSFWSYSKRTMTGYWSTQGCRLLTTNKTHTTCSCNHLTNFAVLMAHVEVK) is GPS. Residues 923-939 (TNFAVLMAHVEVKHSDA) are stachel. A helical membrane pass occupies residues 944 to 969 (LLDVITWVGILLSLVCLLICIFTFCF). Topologically, residues 970–975 (FRGLQS) are cytoplasmic. The helical transmembrane segment at 976–999 (DRNTIHKNLCISLFVAELLFLIGI) threads the bilayer. An N-linked (GlcNAc...) asparagine glycan is attached at Asn-1000. Over 1000 to 1006 (NRTDQPI) the chain is Extracellular. A helical transmembrane segment spans residues 1007–1034 (ACAVFAALLHFFFLAAFTWMFLEGVQLY). A disulfide bridge links Cys-1008 with Cys-1080. Residues 1035-1048 (IMLVEVFESEHSRR) lie on the Cytoplasmic side of the membrane. Residues 1049 to 1071 (KYFYLVGYGMPALIVAVSAAVDY) traverse the membrane as a helical segment. Residues 1072–1086 (RSYGTDKVCWLRLDT) lie on the Extracellular side of the membrane. A helical transmembrane segment spans residues 1087 to 1112 (YFIWSFIGPATLIIMLNVIFLGIALY). The Cytoplasmic segment spans residues 1113–1142 (KMFHHTAILKPESGCLDNINYEDNRPFIKS). A helical membrane pass occupies residues 1143–1163 (WVIGAIALLCLLGLTWAFGLM). Topologically, residues 1164–1168 (YINES) are extracellular. The N-linked (GlcNAc...) asparagine glycan is linked to Asn-1166. Residues 1169–1195 (TVIMAYLFTIFNSLQGMFIFIFHCVLQ) form a helical membrane-spanning segment. The Cytoplasmic segment spans residues 1196 to 1537 (KKVRKEYGKC…KGPAHLVTSL (342 aa)). The segment at 1213–1237 (GKSTESSIGSGKTSGSRTPGRYSTG) is disordered. Phosphoserine is present on residues Ser-1254 and Ser-1522. Residues 1512 to 1537 (FIVPPNKDGASPEGTSKGPAHLVTSL) form a disordered region. The PDZ-binding signature appears at 1532-1537 (HLVTSL).

Belongs to the G-protein coupled receptor 2 family. LN-TM7 subfamily. In terms of assembly, heterodimer of 2 chains generated by proteolytic processing; the large extracellular N-terminal fragment and the membrane-bound C-terminal fragment predominantly remain associated and non-covalently linked. Interacts (via olfactomedin-like domain) with FLRT1 (via extracellular domain). Interacts (via olfactomedin-like domain) with FLRT2 (via extracellular domain). Interacts (via olfactomedin-like domain) with FLRT3 (via extracellular domain); the interaction is direct. Interacts (via extracellular domain) with TENM1. Interacts (via extracellular domain) with TENM2. Interacts (via extracellular domain) with TENM3. Identified in a complex with FLRT3 and UNC5B; does not interact with UNC5B by itself. Identified in a complex with FLRT3 and UNC5D; does not interact with UNC5D by itself. Interacts (via PDZ-binding motif) with SHANK3. Interacts (via PDZ-binding motif) with DLG4. Post-translationally, autoproteolytically processed at the GPS region of the GAIN-B domain; this cleavage modulates receptor activity. O-glycosylated (major) and N-glycosylated. In terms of tissue distribution, localizes to postsynaptic spines in non-overlapping dendritic domains of CA1-region pyramidal neurons: specifically localizes to excitatory synapses in the S.oriens and S.radiatum, corresponding to distinct presynaptic inputs onto CA1-region pyramidal neurons.

It localises to the cell membrane. The protein localises to the postsynaptic cell membrane. Its subcellular location is the cell projection. It is found in the axon. The protein resides in the cell junction. With respect to regulation, forms a heterodimer of 2 chains generated by proteolytic processing that remain associated through non-covalent interactions mediated by the GAIN-B domain. In the inactivated receptor, the Stachel sequence (also named stalk) is embedded in the GAIN-B domain, where it adopts a beta-strand conformation. On activation, the Stachel moves into the 7 transmembrane region and adopts a twisted hook-shaped configuration that forms contacts within the receptor, leading to coupling of a G-alpha protein, which activates signaling. The cleaved GAIN-B and N-terminal domains can then dissociate from the rest of the receptor. In terms of biological role, orphan adhesion G-protein coupled receptor (aGPCR), which mediates synapse specificity. Ligand binding causes a conformation change that triggers signaling via guanine nucleotide-binding proteins (G proteins) and modulates the activity of downstream effectors. ADGRL3 is coupled with different classes of G alpha proteins, such as G(12)/G(13), G(s), G(i) or G(q), depending on the context. Coupling to G(12)/G(13) G proteins, which mediates the activation Rho small GTPases is the most efficient. Following G-protein coupled receptor activation, associates with cell adhesion molecules that are expressed at the surface of adjacent cells to direct synapse specificity. Specifically mediates the establishment of Schaffer-collateral synapses formed by CA3-region axons on CA1-region pyramidal neurons in the hippocampus. Localizes to postsynaptic spines in excitatory synapses in the S.oriens and S.radiatum and interacts with presynaptic cell adhesion molecules FLRT3 and TENM2, promoting synapse formation. Plays a role in the development of glutamatergic synapses in the cortex. Important in determining the connectivity rates between the principal neurons in the cortex. Functionally, orphan adhesion G-protein coupled receptor (aGPCR), which mediates synapse specificity. Ligand binding causes a conformation change that triggers signaling via guanine nucleotide-binding proteins (G proteins) and modulates the activity of downstream effectors, such as adenylate cyclase. Isoform 1 is specifically coupled to G(s) G proteins and mediates activation of adenylate cyclase activity. Following G-protein coupled receptor activation, undergoes liquid-liquid phase transition, associates with (1) cell adhesion molecules that are expressed at the surface of adjacent cells, as well as (2) PDZ-containing proteins, such as SHANK3 and DLG4, in the cytoplasm to direct synapse formation. Its function is as follows. Orphan adhesion G-protein coupled receptor (aGPCR). Ligand binding causes a conformation change that triggers signaling via guanine nucleotide-binding proteins (G proteins) and modulates the activity of downstream effectors, such as RhoA pathway. Isoform 7 is coupled to G(12) and/or G(13) G proteins (GNA12 and GNA13, respectively) and mediates the activation Rho small GTPases. This Mus musculus (Mouse) protein is Adhesion G protein-coupled receptor L3.